A 532-amino-acid chain; its full sequence is 2,3-bisphosphoglycerate-independent phosphoglycerate mutase (532 aa).

Mn(2+) contacts are provided by D13 and S63. S63 (phosphoserine intermediate) is an active-site residue. Substrate contacts are provided by residues H124, 154–155 (RD), R187, R193, 262–265 (RPDR), and K343. Mn(2+) contacts are provided by D421, H425, D463, H464, and H481.

It belongs to the BPG-independent phosphoglycerate mutase family. As to quaternary structure, monomer. Requires Mn(2+) as cofactor.

The enzyme catalyses (2R)-2-phosphoglycerate = (2R)-3-phosphoglycerate. Its pathway is carbohydrate degradation; glycolysis; pyruvate from D-glyceraldehyde 3-phosphate: step 3/5. In terms of biological role, catalyzes the interconversion of 2-phosphoglycerate and 3-phosphoglycerate. This chain is 2,3-bisphosphoglycerate-independent phosphoglycerate mutase, found in Mesoplasma florum (strain ATCC 33453 / NBRC 100688 / NCTC 11704 / L1) (Acholeplasma florum).